The chain runs to 384 residues: Alanine racemase (384 aa).

Lysine 42 (proton acceptor; specific for D-alanine) is an active-site residue. Residue lysine 42 is modified to N6-(pyridoxal phosphate)lysine. Arginine 140 is a substrate binding site. Catalysis depends on tyrosine 271, which acts as the Proton acceptor; specific for L-alanine. Methionine 319 contacts substrate.

It belongs to the alanine racemase family. Homodimer. Pyridoxal 5'-phosphate serves as cofactor.

It carries out the reaction L-alanine = D-alanine. Its pathway is amino-acid biosynthesis; D-alanine biosynthesis; D-alanine from L-alanine: step 1/1. Its function is as follows. Catalyzes the interconversion of L-alanine and D-alanine. The chain is Alanine racemase (alr) from Mycobacterium tuberculosis (strain CDC 1551 / Oshkosh).